The sequence spans 842 residues: Oligopeptide transporter phomP2' (842 aa).

The tract at residues 1–58 is disordered; sequence MEADPKVPFTDEMNIQDEHNWESGSWSSSRRSNDSNVTLLSRRSSVEQHEDERQKDSD. Residues 23 to 36 show a composition bias toward low complexity; the sequence is SGSWSSSRRSNDSN. Asn33 and Asn36 each carry an N-linked (GlcNAc...) asparagine glycan. A compositionally biased stretch (basic and acidic residues) spans 44 to 58; sequence SSVEQHEDERQKDSD. Helical transmembrane passes span 105–125, 177–197, 210–230, 268–288, 315–335, and 345–365; these read VWLLSTFWVLAGCSISTVYYF, ALVVIAYWGSSYTAYGLGPLS, PWAITFLVTTQLTGYGLVGLY, VFMAIASAAFVYQWLPSFVFP, GFGLMDFSLDWNYVAFLSPLF, and FVGAALAVWITYPVAYFSDAL. N-linked (GlcNAc...) asparagine glycans are attached at residues Asn386 and Asn398. 4 consecutive transmembrane segments (helical) span residues 415 to 435, 478 to 498, 505 to 525, and 585 to 605; these read AMHFFWGFASASAIVTYAVLF, AWYALLLAVCLCLGTIQLYAG, WGLQLVVAISALFTLPCGMLF, and WELLVAQVYGTLLGPFVNWAV. The span at 629 to 649 shows a compositional bias: gly residues; sequence QGLGLGQGGGGGGGGGGGGGQ. A disordered region spans residues 629-657; the sequence is QGLGLGQGGGGGGGGGGGGGQQQRAAGAH. Helical transmembrane passes span 668–688, 700–720, and 731–751; these read NFFSSSVIWGVMGPARVFGGG, WLLPSGFAVGAAAVLLLWLIH, and WPLHPAIIFHGASLFPVFPTT. N-linked (GlcNAc...) asparagine glycosylation is present at Asn752. The chain crosses the membrane as a helical span at residues 784–804; the sequence is AGLDCGAQLVQMVLGLAFLVF.

This sequence belongs to the oligopeptide OPT transporter family.

It is found in the membrane. Functionally, oligopeptide transporter; part of the gene cluster that mediates the biosynthesis of the phomopsins, a group of hexapeptide mycotoxins which infects lupins and causes lupinosis disease in livestock. In Diaporthe leptostromiformis (Lupinosis disease fungus), this protein is Oligopeptide transporter phomP2'.